We begin with the raw amino-acid sequence, 1073 residues long: Serine/threonine-protein kinase 11-interacting protein (1073 aa).

6 LRR repeats span residues 166–187, 189–210, 212–233, 236–257, 258–279, and 283–304; these read ELQTVNFSYNSITALDDSLQLL, ALRVLDLSHNKVQDCEHYLTTL, ELEYLNLAYNFLSKVPNLGIFS, KLLTLILRNNELDSINGVEQLV, NLQHLDVAYNLLLEHAQLAPLS, and YLKKLHLEGNPLWFHQNHRSAT. Disordered stretches follow at residues 389 to 409, 455 to 533, 724 to 817, and 834 to 859; these read VKVRRASISEPSDTEHESQAL, SRSA…EKPE, EVSS…QGMK, and MGSYRYSASRGPTSSQLSMTSDSEET. Acidic residues predominate over residues 515-532; sequence REEEADELMLGEEEDEKP. Polar residues-rich tracts occupy residues 779–788 and 843–859; these read MDTSNSTRTP and RGPTSSQLSMTSDSEET.

This sequence belongs to the STK11IP family.

It localises to the cytoplasm. This chain is Serine/threonine-protein kinase 11-interacting protein (STK11IP), found in Gallus gallus (Chicken).